Consider the following 460-residue polypeptide: Argininosuccinate lyase (460 aa).

This sequence belongs to the lyase 1 family. Argininosuccinate lyase subfamily.

The protein localises to the cytoplasm. It carries out the reaction 2-(N(omega)-L-arginino)succinate = fumarate + L-arginine. It functions in the pathway amino-acid biosynthesis; L-arginine biosynthesis; L-arginine from L-ornithine and carbamoyl phosphate: step 3/3. In Alkaliphilus metalliredigens (strain QYMF), this protein is Argininosuccinate lyase.